The primary structure comprises 513 residues: 2,3-bisphosphoglycerate-independent phosphoglycerate mutase (513 aa).

The Mn(2+) site is built by D13 and S63. The active-site Phosphoserine intermediate is the S63. Substrate is bound by residues H124, 154 to 155, R186, R192, 262 to 265, and K335; these read RD and RADR. 5 residues coordinate Mn(2+): D402, H406, D443, H444, and H462.

Belongs to the BPG-independent phosphoglycerate mutase family. As to quaternary structure, monomer. Requires Mn(2+) as cofactor.

It catalyses the reaction (2R)-2-phosphoglycerate = (2R)-3-phosphoglycerate. The protein operates within carbohydrate degradation; glycolysis; pyruvate from D-glyceraldehyde 3-phosphate: step 3/5. Its function is as follows. Catalyzes the interconversion of 2-phosphoglycerate and 3-phosphoglycerate. The polypeptide is 2,3-bisphosphoglycerate-independent phosphoglycerate mutase (Shewanella amazonensis (strain ATCC BAA-1098 / SB2B)).